Reading from the N-terminus, the 152-residue chain is Eukaryotic translation initiation factor 2 subunit 3 (152 aa).

Ala1 carries the N-acetylalanine modification. 51 to 54 (NKID) provides a ligand contact to GTP.

Belongs to the TRAFAC class translation factor GTPase superfamily. Classic translation factor GTPase family. EIF2G subfamily. Eukaryotic translation initiation factor 2 eIF2 is a heterotrimeric complex composed of an alpha (EIF2S1), a beta (EIF2S2) and a gamma (EIF2S3) chain. eIF2 is member of the 43S pre-initiation complex (43S PIC). Interacts (via C-terminus) with CDC123; the interaction is direct.

The protein localises to the cytoplasm. It is found in the cytosol. Functionally, member of the eIF2 complex that functions in the early steps of protein synthesis by forming a ternary complex with GTP and initiator tRNA. This complex binds to a 40S ribosomal subunit, followed by mRNA binding to form the 43S pre-initiation complex (43S PIC). Junction of the 60S ribosomal subunit to form the 80S initiation complex is preceded by hydrolysis of the GTP bound to eIF2 and release of an eIF2-GDP binary complex. In order for eIF2 to recycle and catalyze another round of initiation, the GDP bound to eIF2 must exchange with GTP by way of a reaction catalyzed by eIF-2B. This Oryctolagus cuniculus (Rabbit) protein is Eukaryotic translation initiation factor 2 subunit 3 (EIF2S3).